A 209-amino-acid polypeptide reads, in one-letter code: Ribonuclease HII (209 aa).

Residues 20–209 (DSEIGIDEVG…KSFLNKLNLI (190 aa)) form the RNase H type-2 domain. Positions 26, 27, and 122 each coordinate a divalent metal cation.

It belongs to the RNase HII family. Requires Mn(2+) as cofactor. It depends on Mg(2+) as a cofactor.

It is found in the cytoplasm. The enzyme catalyses Endonucleolytic cleavage to 5'-phosphomonoester.. Functionally, endonuclease that specifically degrades the RNA of RNA-DNA hybrids. This Prochlorococcus marinus subsp. pastoris (strain CCMP1986 / NIES-2087 / MED4) protein is Ribonuclease HII.